A 311-amino-acid polypeptide reads, in one-letter code: Acetyl-coenzyme A carboxylase carboxyl transferase subunit beta (311 aa).

Positions 32 to 299 (LWVKCPVSEE…TSMPAALTPP (268 aa)) constitute a CoA carboxyltransferase N-terminal domain. Residues 291-311 (SMPAALTPPAPDHVVADGGSH) form a disordered region.

It belongs to the AccD/PCCB family. In terms of assembly, acetyl-CoA carboxylase is a heterohexamer composed of biotin carboxyl carrier protein (AccB), biotin carboxylase (AccC) and two subunits each of ACCase subunit alpha (AccA) and ACCase subunit beta (AccD).

The protein resides in the cytoplasm. The catalysed reaction is N(6)-carboxybiotinyl-L-lysyl-[protein] + acetyl-CoA = N(6)-biotinyl-L-lysyl-[protein] + malonyl-CoA. It functions in the pathway lipid metabolism; malonyl-CoA biosynthesis; malonyl-CoA from acetyl-CoA: step 1/1. Component of the acetyl coenzyme A carboxylase (ACC) complex. Biotin carboxylase (BC) catalyzes the carboxylation of biotin on its carrier protein (BCCP) and then the CO(2) group is transferred by the transcarboxylase to acetyl-CoA to form malonyl-CoA. In Maricaulis maris (strain MCS10) (Caulobacter maris), this protein is Acetyl-coenzyme A carboxylase carboxyl transferase subunit beta.